Here is a 308-residue protein sequence, read N- to C-terminus: Ribosomal protein L11 methyltransferase (308 aa).

S-adenosyl-L-methionine contacts are provided by T160, G181, D203, and N245.

Belongs to the methyltransferase superfamily. PrmA family.

The protein resides in the cytoplasm. It catalyses the reaction L-lysyl-[protein] + 3 S-adenosyl-L-methionine = N(6),N(6),N(6)-trimethyl-L-lysyl-[protein] + 3 S-adenosyl-L-homocysteine + 3 H(+). In terms of biological role, methylates ribosomal protein L11. This chain is Ribosomal protein L11 methyltransferase, found in Thermoanaerobacter sp. (strain X514).